Here is a 182-residue protein sequence, read N- to C-terminus: MKQRLLFLGPPGAGKGTQAERLCAAHELMHLSTGDLLRAEVGAKTPLGQEAAAVMNRGELVSDELVLAIVENQLKNQSGGWLLDGFPRTLIQATALEPLLEELKQPIEAVVLLELNDAVLIERLISRGRSDDNESVIRNRLEVYREKTAPLIDHYRQQGLLQTVEAQGSIESIAISIEKSLC.

12-17 (GAGKGT) lines the ATP pocket. Residues 32–61 (STGDLLRAEVGAKTPLGQEAAAVMNRGELV) form an NMP region. AMP contacts are provided by residues Thr33, Arg38, 59-61 (ELV), 85-88 (GFPR), and Gln92. The interval 126–132 (SRGRSDD) is LID. Residue Arg127 participates in ATP binding. Arg129 and Arg140 together coordinate AMP. Gly168 is a binding site for ATP.

Belongs to the adenylate kinase family. As to quaternary structure, monomer.

The protein resides in the cytoplasm. It carries out the reaction AMP + ATP = 2 ADP. It participates in purine metabolism; AMP biosynthesis via salvage pathway; AMP from ADP: step 1/1. In terms of biological role, catalyzes the reversible transfer of the terminal phosphate group between ATP and AMP. Plays an important role in cellular energy homeostasis and in adenine nucleotide metabolism. The polypeptide is Adenylate kinase (Prochlorococcus marinus (strain MIT 9303)).